The primary structure comprises 609 residues: Dihydroxy-acid dehydratase 1 (609 aa).

A Mg(2+)-binding site is contributed by D81. C122 lines the [2Fe-2S] cluster pocket. Residues D123 and K124 each contribute to the Mg(2+) site. Residue K124 is modified to N6-carboxylysine. Residue C195 participates in [2Fe-2S] cluster binding. Mg(2+) is bound at residue E491. Residue S517 is the Proton acceptor of the active site.

This sequence belongs to the IlvD/Edd family. Homodimer. [2Fe-2S] cluster serves as cofactor. It depends on Mg(2+) as a cofactor.

The enzyme catalyses (2R)-2,3-dihydroxy-3-methylbutanoate = 3-methyl-2-oxobutanoate + H2O. The catalysed reaction is (2R,3R)-2,3-dihydroxy-3-methylpentanoate = (S)-3-methyl-2-oxopentanoate + H2O. It participates in amino-acid biosynthesis; L-isoleucine biosynthesis; L-isoleucine from 2-oxobutanoate: step 3/4. It functions in the pathway amino-acid biosynthesis; L-valine biosynthesis; L-valine from pyruvate: step 3/4. Functions in the biosynthesis of branched-chain amino acids. Catalyzes the dehydration of (2R,3R)-2,3-dihydroxy-3-methylpentanoate (2,3-dihydroxy-3-methylvalerate) into 2-oxo-3-methylpentanoate (2-oxo-3-methylvalerate) and of (2R)-2,3-dihydroxy-3-methylbutanoate (2,3-dihydroxyisovalerate) into 2-oxo-3-methylbutanoate (2-oxoisovalerate), the penultimate precursor to L-isoleucine and L-valine, respectively. This chain is Dihydroxy-acid dehydratase 1, found in Acinetobacter baylyi (strain ATCC 33305 / BD413 / ADP1).